The primary structure comprises 504 residues: ATP synthase subunit alpha (504 aa).

Residue 171–178 (GDRATGKT) coordinates ATP.

Belongs to the ATPase alpha/beta chains family. In terms of assembly, F-type ATPases have 2 components, CF(1) - the catalytic core - and CF(0) - the membrane proton channel. CF(1) has five subunits: alpha(3), beta(3), gamma(1), delta(1), epsilon(1). CF(0) has three main subunits: a(1), b(2) and c(9-12). The alpha and beta chains form an alternating ring which encloses part of the gamma chain. CF(1) is attached to CF(0) by a central stalk formed by the gamma and epsilon chains, while a peripheral stalk is formed by the delta and b chains.

It is found in the cell inner membrane. It carries out the reaction ATP + H2O + 4 H(+)(in) = ADP + phosphate + 5 H(+)(out). Its function is as follows. Produces ATP from ADP in the presence of a proton gradient across the membrane. The alpha chain is a regulatory subunit. The protein is ATP synthase subunit alpha of Sulfurihydrogenibium sp. (strain YO3AOP1).